Here is an 847-residue protein sequence, read N- to C-terminus: Follistatin-related protein 5 (847 aa).

Residues 1 to 20 form the signal peptide; it reads MFRCWSAILILGFIFLASEG. The 55-residue stretch at 81–135 folds into the Kazal-like domain; that stretch reads ETRHAECACMDLCKQHYKPVCGSDGEFYENHCEVHRAACLKKQKITIVHNEDCFF. 3 cysteine pairs are disulfide-bonded: C87–C119, C93–C112, and C101–C133. EF-hand domains follow at residues 175-210 and 211-246; these read RKKP…EELN and KDLS…QVIQ. Ca(2+) contacts are provided by D188, D190, N192, E199, D226, N228, D230, H232, and E237. Ig-like domains are found at residues 250–338 and 341–426; these read PEDQ…FQVN and PVIR…EDIS. 2 disulfides stabilise this stretch: C270-C321 and C362-C413. Residues N318 and N394 are each glycosylated (N-linked (GlcNAc...) asparagine).

Its subcellular location is the secreted. The protein is Follistatin-related protein 5 (Fstl5) of Mus musculus (Mouse).